The primary structure comprises 291 residues: 4-hydroxy-tetrahydrodipicolinate synthase (291 aa).

Residue Thr44 participates in pyruvate binding. Tyr132 acts as the Proton donor/acceptor in catalysis. Catalysis depends on Lys160, which acts as the Schiff-base intermediate with substrate. Ile202 contributes to the pyruvate binding site.

This sequence belongs to the DapA family. As to quaternary structure, homotetramer; dimer of dimers.

Its subcellular location is the cytoplasm. It carries out the reaction L-aspartate 4-semialdehyde + pyruvate = (2S,4S)-4-hydroxy-2,3,4,5-tetrahydrodipicolinate + H2O + H(+). Its pathway is amino-acid biosynthesis; L-lysine biosynthesis via DAP pathway; (S)-tetrahydrodipicolinate from L-aspartate: step 3/4. Catalyzes the condensation of (S)-aspartate-beta-semialdehyde [(S)-ASA] and pyruvate to 4-hydroxy-tetrahydrodipicolinate (HTPA). The protein is 4-hydroxy-tetrahydrodipicolinate synthase of Parvibaculum lavamentivorans (strain DS-1 / DSM 13023 / NCIMB 13966).